A 290-amino-acid polypeptide reads, in one-letter code: Porphobilinogen deaminase (290 aa).

Residue Cys-237 is modified to S-(dipyrrolylmethanemethyl)cysteine.

It belongs to the HMBS family. As to quaternary structure, monomer. Requires dipyrromethane as cofactor.

It carries out the reaction 4 porphobilinogen + H2O = hydroxymethylbilane + 4 NH4(+). Its pathway is porphyrin-containing compound metabolism; protoporphyrin-IX biosynthesis; coproporphyrinogen-III from 5-aminolevulinate: step 2/4. Its function is as follows. Tetrapolymerization of the monopyrrole PBG into the hydroxymethylbilane pre-uroporphyrinogen in several discrete steps. In Clostridium botulinum (strain Kyoto / Type A2), this protein is Porphobilinogen deaminase.